Consider the following 484-residue polypeptide: Solute carrier family 40 member 1 (484 aa).

A run of 11 helical transmembrane segments spans residues 58–78 (LLTA…GPIV), 94–114 (WLLL…ALLV), 123–143 (GFPA…LAAL), 189–209 (VLSG…ALAA), 212–232 (LAAV…FPAL), 279–299 (VVLP…FGTL), 308–328 (GIPA…GIAA), 346–366 (LWSI…VWAG), 377–397 (LMGG…AVMQ), 413–433 (GVQN…GIIV), and 442–462 (LIVL…MHVY).

It belongs to the ferroportin (FP) (TC 2.A.100) family. SLC40A subfamily.

It localises to the membrane. Functionally, may be involved in iron transport and iron homeostasis. The protein is Solute carrier family 40 member 1 of Oryza sativa subsp. japonica (Rice).